The chain runs to 220 residues: Sec-independent protein translocase protein TatB (220 aa).

Residues 1-21 (MFDIGFSELLLVLVIGLVVLG) form a helical membrane-spanning segment. Positions 190–220 (VTKQQIDTIDSHGTDLSSAGPSRIHQPGGDQ) are disordered.

Belongs to the TatB family. In terms of assembly, the Tat system comprises two distinct complexes: a TatABC complex, containing multiple copies of TatA, TatB and TatC subunits, and a separate TatA complex, containing only TatA subunits. Substrates initially bind to the TatABC complex, which probably triggers association of the separate TatA complex to form the active translocon.

The protein resides in the cell inner membrane. Functionally, part of the twin-arginine translocation (Tat) system that transports large folded proteins containing a characteristic twin-arginine motif in their signal peptide across membranes. Together with TatC, TatB is part of a receptor directly interacting with Tat signal peptides. TatB may form an oligomeric binding site that transiently accommodates folded Tat precursor proteins before their translocation. This Yersinia pseudotuberculosis serotype I (strain IP32953) protein is Sec-independent protein translocase protein TatB.